An 878-amino-acid chain; its full sequence is Probable receptor-like protein kinase At4g39110 (878 aa).

An N-terminal signal peptide occupies residues 1–43 (MEIRKKPNIFTVLVIDFSSKPSMALLLAILLFLSGPSASAVAA). Over 44 to 440 (AAVGPATGFK…GRTTGMGKHG (397 aa)) the chain is Extracellular. N170, N183, N254, N317, and N382 each carry an N-linked (GlcNAc...) asparagine glycan. Residues 441–461 (MVATAGFVMMFGAFIGLGAMV) traverse the membrane as a helical segment. The Cytoplasmic segment spans residues 462 to 878 (YKWKKRPQDW…FTQFANLNGR (417 aa)). The Protein kinase domain occupies 526-798 (FEASQIIGVG…GDVLWNLEYA (273 aa)). Residues 532 to 540 (IGVGGFGNV) and K554 each bind ATP. Catalysis depends on D650, which acts as the Proton acceptor. The segment at 808–844 (GKAEETENAKPDVVTPGSVPVSDPSPITPSVTTNEAA) is disordered.

Belongs to the protein kinase superfamily. Ser/Thr protein kinase family.

Its subcellular location is the membrane. The sequence is that of Probable receptor-like protein kinase At4g39110 from Arabidopsis thaliana (Mouse-ear cress).